Consider the following 717-residue polypeptide: Probable E3 ubiquitin-protein ligase WAVH2 (717 aa).

Polar residues-rich tracts occupy residues 13–28 (VSSNQDKPQQHSSLHT) and 85–94 (RTTSNATPRT). Positions 13–120 (VSSNQDKPQQ…SSSSSSSQGG (108 aa)) are disordered. A compositionally biased stretch (low complexity) spans 95 to 117 (SNSSSPKFFSNPSSPKSSSSSSS). The RING-type; atypical zinc-finger motif lies at 140-184 (CAICLQRVNSNQSNSTAAIFTAECSHSFHLSCVNGLEDKRCPFCS). Positions 326–456 (DLVTVLDLSN…LNATRIPFVV (131 aa)) constitute a VWFA domain.

In terms of tissue distribution, expressed in root tips, cotyledons, leaf primordia and hypocotyls.

It catalyses the reaction S-ubiquitinyl-[E2 ubiquitin-conjugating enzyme]-L-cysteine + [acceptor protein]-L-lysine = [E2 ubiquitin-conjugating enzyme]-L-cysteine + N(6)-ubiquitinyl-[acceptor protein]-L-lysine.. In terms of biological role, probable E3 ubiquitin-protein ligase involved in the regulation of root growth. Acts as a positive regulator of root gravitropism. This Arabidopsis thaliana (Mouse-ear cress) protein is Probable E3 ubiquitin-protein ligase WAVH2.